We begin with the raw amino-acid sequence, 403 residues long: Tryptophan synthase beta chain (403 aa).

At lysine 87 the chain carries N6-(pyridoxal phosphate)lysine.

The protein belongs to the TrpB family. Tetramer of two alpha and two beta chains. Pyridoxal 5'-phosphate is required as a cofactor.

It carries out the reaction (1S,2R)-1-C-(indol-3-yl)glycerol 3-phosphate + L-serine = D-glyceraldehyde 3-phosphate + L-tryptophan + H2O. The protein operates within amino-acid biosynthesis; L-tryptophan biosynthesis; L-tryptophan from chorismate: step 5/5. Its function is as follows. The beta subunit is responsible for the synthesis of L-tryptophan from indole and L-serine. In Shewanella loihica (strain ATCC BAA-1088 / PV-4), this protein is Tryptophan synthase beta chain.